Consider the following 639-residue polypeptide: Chaperone protein DnaK (639 aa).

Thr-197 carries the post-translational modification Phosphothreonine; by autocatalysis. 2 stretches are compositionally biased toward basic and acidic residues: residues 514–529 and 540–553; these read AEENAEADKDRKDLVE and GTEKSLEEHGEKVD. Disordered stretches follow at residues 514-554 and 603-639; these read AEEN…KVDP and DKAEAAQDGAPEEEERGVDEDIVDADFEDLDDDRKRG. Over residues 612–633 the composition is skewed to acidic residues; it reads APEEEERGVDEDIVDADFEDLD.

Belongs to the heat shock protein 70 family.

In terms of biological role, acts as a chaperone. The sequence is that of Chaperone protein DnaK from Jannaschia sp. (strain CCS1).